A 522-amino-acid chain; its full sequence is Target of rapamycin complex 2 subunit MAPKAP1 (522 aa).

The residue at position 2 (alanine 2) is an N-acetylalanine. The interval 2–184 (AFLDNPTIIL…KKIDVYLPLH (183 aa)) is interaction with MAP3K2. An interaction with NBN region spans residues 2 to 267 (AFLDNPTIIL…GFSTLALVEK (266 aa)). Residue threonine 86 is modified to Phosphothreonine. Phosphoserine is present on residues serine 128, serine 186, serine 315, and serine 356. The 129-residue stretch at 139–267 (QSILSVRLEQ…GFSTLALVEK (129 aa)) folds into the CRIM domain. The interval 279–353 (LFVRINAAHG…QSAWEFCQVR (75 aa)) is SIN1-type RBD. In terms of domain architecture, SIN1-type PH spans 382 to 487 (HYKSFKVSMI…IVLKVNYILE (106 aa)). Residue arginine 393 participates in a 1,2-diacyl-sn-glycero-3-phospho-(1D-myo-inositol-3,4,5-trisphosphate) binding. Residue threonine 398 is modified to Phosphothreonine. A 1,2-diacyl-sn-glycero-3-phospho-(1D-myo-inositol-3,4,5-trisphosphate)-binding residues include lysine 428 and lysine 464. The tract at residues 468 to 522 (FESDAATVNEIVLKVNYILESRASTARADYFAQKQRKLNRRTSFSFQKEKKSGQQ) is interaction with ATF2. Phosphoserine is present on serine 510.

Belongs to the SIN1 family. Component of the mechanistic target of rapamycin complex 2 (mTORC2), consisting in two heterotretramers composed of MTOR, MLST8, RICTOR and MAPKAP1/SIN1. The mTORC2 core complex associates with PRR5/PROTOR1 and/or PRR5L/PROTOR2. Contrary to mTORC1, mTORC2 does not bind to and is not sensitive to FKBP12-rapamycin. Interacts with MAP3K2. Interacts with ATF2. Interacts with MAPK8. Interacts with GTP-bound HRAS and KRAS; inhibiting their activity. Interacts with IFNAR2. Phosphorylation at Ser-128 by PKC promotes relocalization to the perinuclear region, where the mTORC2 complex specifically mediates phosphorylation of SGK1. Phosphorylated at Thr-86 by AKT1 or RPS6KB1 in the presence of growth factors; the effect of this phosphorylation is however unclear. According to two studies, phosphorylation at Thr-86 by AKT1 is part of a positive feedback loop that increases mTORC2 activation. According to another study, phosphorylation at Thr-86 and Thr-398 by RPS6KB1 promotes dissociation from the mTORC2 complex, leading to inhibit mTORC2 signaling.

The protein resides in the cell membrane. Its subcellular location is the endoplasmic reticulum membrane. The protein localises to the early endosome membrane. It localises to the late endosome membrane. It is found in the lysosome membrane. The protein resides in the golgi apparatus membrane. Its subcellular location is the mitochondrion outer membrane. The protein localises to the cytoplasm. It localises to the perinuclear region. It is found in the nucleus. Phosphatidylinositol 3,4,5-trisphosphate (PI(3,4,5)P3) promotes MTOR activation by relieving MAPKAP1/SIN1-mediated inhibition of MTOR that takes place in absence of PI(3,4,5)P3. Functionally, component of the mechanistic target of rapamycin complex 2 (mTORC2), which transduces signals from growth factors to pathways involved in proliferation, cytoskeletal organization, lipogenesis and anabolic output. In response to growth factors, mTORC2 phosphorylates and activates AGC protein kinase family members, including AKT (AKT1, AKT2 and AKT3), PKC (PRKCA, PRKCB and PRKCE) and SGK1. In contrast to mTORC1, mTORC2 is nutrient-insensitive. Within the mTORC2 complex, MAPKAP1/SIN1 acts as a substrate adapter which recognizes and binds AGC protein kinase family members for phosphorylation by MTOR. mTORC2 plays a critical role in AKT1 activation by mediating phosphorylation of different sites depending on the context, such as 'Thr-450', 'Ser-473', 'Ser-477' or 'Thr-479', facilitating the phosphorylation of the activation loop of AKT1 on 'Thr-308' by PDPK1/PDK1 which is a prerequisite for full activation. mTORC2 catalyzes the phosphorylation of SGK1 at 'Ser-422' and of PRKCA on 'Ser-657'. The mTORC2 complex also phosphorylates various proteins involved in insulin signaling, such as FBXW8 and IGF2BP1. mTORC2 acts upstream of Rho GTPases to regulate the actin cytoskeleton, probably by activating one or more Rho-type guanine nucleotide exchange factors. mTORC2 promotes the serum-induced formation of stress-fibers or F-actin. MAPKAP1 inhibits MAP3K2 by preventing its dimerization and autophosphorylation. Inhibits HRAS and KRAS independently of mTORC2 complex. Enhances osmotic stress-induced phosphorylation of ATF2 and ATF2-mediated transcription. Involved in ciliogenesis, regulates cilia length through its interaction with CCDC28B independently of mTORC2 complex. The sequence is that of Target of rapamycin complex 2 subunit MAPKAP1 (MAPKAP1) from Pongo abelii (Sumatran orangutan).